Here is a 289-residue protein sequence, read N- to C-terminus: MLLRGFSELLKCRGVMMKMRMKMSGDSSSLTLTEQQGGIRRIILNNPRKRNALSLQMLESLRENILTDADNPELHVIIISAVGPVFSSGHDLQELSSAEGSDLPRRVFHSCSELMMLIQDLPVPVIAMVNGVATAAGCQLVASCDVAVASEKSTFATPGVNVGLFCSTPAVAIGRTVPRKIAMQMLLTGRPLSAQQALQHGLLSAVFSEERLEDETLAIARRVCESSRPVVSLGKQIFNTQMSQSRDAAYSTAGAAMLDNLRLRDGQEGIRAFLEKRKPVWSNTDDCIH.

A mitochondrion-targeting transit peptide spans 1–14; the sequence is MLLRGFSELLKCRG.

Belongs to the enoyl-CoA hydratase/isomerase family.

Its subcellular location is the mitochondrion. May play a role in fatty acid biosynthesis and insulin sensitivity. This Danio rerio (Zebrafish) protein is Enoyl-CoA hydratase domain-containing protein 3, mitochondrial (echdc3).